The sequence spans 431 residues: TDP-daunosamine transferase DnrS (431 aa).

The N-terminal stretch at 1 to 23 (MKVLVTAFAMDAHFNGVVPLAWA) is a signal peptide.

This sequence belongs to the glycosyltransferase 28 family.

The catalysed reaction is dTDP-beta-L-daunosamine + epsilon-rhodomycinone = rhodomycin D + dTDP + H(+). The protein operates within antibiotic biosynthesis; daunorubicin biosynthesis. It functions in the pathway antibiotic biosynthesis; carminomycin biosynthesis. Functionally, involved in the biosynthesis of the anthracyclines carminomycin and daunorubicin (daunomycin) which are aromatic polyketide antibiotics that exhibit high cytotoxicity and are widely applied in the chemotherapy of a variety of cancers. Catalyzes the addition of the TDP activated glycoside, L-daunosamine-TDP (2,3,6-trideoxy-3-aminohexose-TDP) at position C-7 of epsilon-rhodomycinone to yield rhodomycin D. Glycosylation is a prerequisite for biological activity of anthracyclines and requires DnrQ which seems to act as an activator. The polypeptide is TDP-daunosamine transferase DnrS (dnrS) (Streptomyces peucetius).